Consider the following 134-residue polypeptide: Phosphoribosyl-AMP cyclohydrolase (134 aa).

D78 is a binding site for Mg(2+). Position 79 (C79) interacts with Zn(2+). The Mg(2+) site is built by D80 and D82. Residues C96 and C103 each coordinate Zn(2+).

It belongs to the PRA-CH family. As to quaternary structure, homodimer. Requires Mg(2+) as cofactor. Zn(2+) is required as a cofactor.

Its subcellular location is the cytoplasm. The catalysed reaction is 1-(5-phospho-beta-D-ribosyl)-5'-AMP + H2O = 1-(5-phospho-beta-D-ribosyl)-5-[(5-phospho-beta-D-ribosylamino)methylideneamino]imidazole-4-carboxamide. Its pathway is amino-acid biosynthesis; L-histidine biosynthesis; L-histidine from 5-phospho-alpha-D-ribose 1-diphosphate: step 3/9. Catalyzes the hydrolysis of the adenine ring of phosphoribosyl-AMP. This Cupriavidus necator (strain ATCC 17699 / DSM 428 / KCTC 22496 / NCIMB 10442 / H16 / Stanier 337) (Ralstonia eutropha) protein is Phosphoribosyl-AMP cyclohydrolase.